We begin with the raw amino-acid sequence, 204 residues long: Ribonuclease HII (204 aa).

The 197-residue stretch at 1 to 197 folds into the RNase H type-2 domain; the sequence is MILGIDEAGR…KNRILNPKLL (197 aa). Asp-6, Glu-7, and Asp-103 together coordinate a divalent metal cation.

It belongs to the RNase HII family. Mn(2+) is required as a cofactor. The cofactor is Mg(2+).

It localises to the cytoplasm. It carries out the reaction Endonucleolytic cleavage to 5'-phosphomonoester.. Endonuclease that specifically degrades the RNA of RNA-DNA hybrids. The sequence is that of Ribonuclease HII from Helicobacter pylori (strain Shi470).